Consider the following 798-residue polypeptide: MSRRRQFDDEDEVQMKRRRGAPLIEDVEKKLQGVIGKVGENTGSSIECNLDKLTAFLHDDLEKYRASIIDIIAGCAIYLPNRVTVYTTLVGLLNSKNFNFGGDVVEKLISEQQDLLSKQKYQEAQNLAIFLCDLGNSGVLTAQSIGEYLESFIAAAFEENMPQVRNDYYIQTVLRCLPWIGKELTEKAPEQMENIGEAIGKYLELRNKNHVALLQVWREGSTDQKQEDYLESLSAQIEALRNADWVENHIPRHYSGFETTLQDALQHNLPSFQSPEHTSDMIYPYPLVVFRLFQDADCSAFSSKPLPGDSSIDRFLFEGEIAWIIEKNQFNRKACARELLAFAEENPSVPIGFLIFETIFGQMLRLPHAPYPAIFHCSLVLELLKLKPDDYPQILVQTVECIYRRADSMQPVCIDRMVDWFSFHLSNFQYRYTWTDWKDCLNKDAFSGSQIFVREVIEKCRRFGSYEKIIAALPQDFVKIHPCSPEVRYLIDEEDTALVQRAETFTQMFQERQPAEAFLNELKSNDENDELPYNINEFGLFVMVMLKMASKTYSHNFSALFRYQTTLKTVCDASELYQEKLLETLYSCWKTNQQMLMILTDKLLKMQVIDCSAVVGWLFDEKMWQEHDRQWLFEVLNQALEKLTRQINVVEKDIKELTEKTENKIKEEDDEESDIKMDEDETKEEKFKQDLEDLENNKEKLERMVTFQKGLFNDFLIAFIEEIKNAATSNTSEMDGSGDTPGTQTPKFMWLRGRFCHVLLAHAETLLKHSSNIADEVFSEGTDPSIIECFNQFQSLRL.

Residues 28-241 (EKKLQGVIGK…SLSAQIEALR (214 aa)) enclose the MIF4G domain. Residues 663–686 (NKIKEEDDEESDIKMDEDETKEEK) are disordered. Residues 668-682 (EDDEESDIKMDEDET) are compositionally biased toward acidic residues.

Belongs to the NCBP1 family. In terms of assembly, component of the nuclear cap-binding complex (CBC), a heterodimer composed of ncbp-1 and ncbp-1 that interacts with m7GpppG-capped RNA.

The protein localises to the nucleus. In terms of biological role, component of the cap-binding complex (CBC), which binds cotranscriptionally to the 5'-cap of pre-mRNAs and is involved in various processes such as pre-mRNA splicing and RNA-mediated gene silencing (RNAi). The CBC complex is involved in miRNA-mediated RNA interference and is required for primary microRNAs (miRNAs) processing. In the CBC complex, ncbp-1 does not bind directly capped RNAs (m7GpppG-capped RNA) but is required to stabilize the movement of the N-terminal loop of ncbp-2 and lock the CBC into a high affinity cap-binding state with the cap structure. The sequence is that of Nuclear cap-binding protein subunit 1 (ncbp-1) from Caenorhabditis elegans.